A 932-amino-acid chain; its full sequence is Protocadherin gamma-A12 (932 aa).

The signal sequence occupies residues Met1–Thr29. Cadherin domains follow at residues Gln30–Phe133, Arg134–Phe242, Ala243–Val347, Val348–Phe452, Pro453–Ile562, and Asp570–Asn683. The Extracellular segment spans residues Gln30 to Tyr692. Residues Asn265, Asn419, and Asn545 are each glycosylated (N-linked (GlcNAc...) asparagine). A helical transmembrane segment spans residues Leu693–Ala713. The Cytoplasmic portion of the chain corresponds to Leu714–Lys932. 2 disordered regions span residues Ser803 to Asn841 and Ala902 to Lys932. Residues Trp816–Asn841 are compositionally biased toward polar residues. Residues Asn922–Lys932 are compositionally biased toward basic residues.

The protein localises to the cell membrane. Potential calcium-dependent cell-adhesion protein. May be involved in the establishment and maintenance of specific neuronal connections in the brain. In Homo sapiens (Human), this protein is Protocadherin gamma-A12 (PCDHGA12).